We begin with the raw amino-acid sequence, 122 residues long: Probable F-box protein At4g23960 (122 aa).

In terms of domain architecture, F-box spans 1-45; that stretch reads MIEQLFPEVTCYALRYLDYSSLCQLSMTSSSMRKTANDDVLWRAL.

This chain is Probable F-box protein At4g23960, found in Arabidopsis thaliana (Mouse-ear cress).